The primary structure comprises 390 residues: Protein YghO (390 aa).

This chain is Protein YghO (yghO), found in Escherichia coli (strain K12).